We begin with the raw amino-acid sequence, 933 residues long: Bromodomain testis-specific protein (933 aa).

The interval methionine 1–isoleucine 21 is disordered. The Bromo 1 domain maps to arginine 28–methionine 134. The short motif at lysine 214–proline 225 is the Nuclear localization signal element. The interval glutamate 235 to valine 263 is disordered. The Bromo 2 domain maps to asparagine 278 to isoleucine 385. Disordered stretches follow at residues arginine 398–alanine 425, lysine 576–serine 610, and glycine 627–threonine 662. Residues glutamate 404–serine 418 show a composition bias toward low complexity. Residues glutamate 423 to threonine 448 are a coiled coil. In terms of domain architecture, NET spans valine 495–proline 577. The segment covering lysine 584–aspartate 603 has biased composition (basic and acidic residues). The segment covering serine 630–serine 660 has biased composition (low complexity). A coiled-coil region spans residues alanine 829 to aspartate 917.

Belongs to the BET family.

The protein localises to the nucleus. In terms of biological role, testis-specific chromatin protein that specifically binds histone H4 acetylated at 'Lys-5' and 'Lys-8' (H4K5ac and H4K8ac, respectively) and plays a key role in spermatogenesis. Required in late pachytene spermatocytes: plays a role in meiotic and post-meiotic cells by binding to acetylated histones at the promoter of specific meiotic and post-meiotic genes, facilitating their activation at the appropriate time. In the post-meiotic phase of spermatogenesis, binds to hyperacetylated histones and participates in their general removal from DNA. Also recognizes and binds a subset of butyrylated histones: able to bind histone H4 butyrylated at 'Lys-8' (H4K8ac), while it is not able to bind H4 butyrylated at 'Lys-5' (H4K5ac). This chain is Bromodomain testis-specific protein (brdt), found in Xenopus tropicalis (Western clawed frog).